The sequence spans 55 residues: ATP synthase small subunit 6-A, mitochondrial (55 aa).

Residues 1–11 constitute a mitochondrion transit peptide; that stretch reads MRLFDPWPVFF. Residues 21–39 form a helical membrane-spanning segment; the sequence is FLTGFAVTGVLITKLTAGL.

Belongs to the ATPase 6 subunit family.

The protein localises to the mitochondrion inner membrane. In terms of biological role, mitochondrial membrane ATP synthase (F(1)F(0) ATP synthase or Complex V) produces ATP from ADP in the presence of a proton gradient across the membrane which is generated by electron transport complexes of the respiratory chain. F-type ATPases consist of two structural domains, F(1) - containing the extramembraneous catalytic core and F(0) - containing the membrane proton channel, linked together by a central stalk and a peripheral stalk. During catalysis, ATP synthesis in the catalytic domain of F(1) is coupled via a rotary mechanism of the central stalk subunits to proton translocation. Part of the complex F(0) domain. Confers tolerance to several abiotic stresses (e.g. salt, mannitol, drought, oxidative and cold stresses), probably by providing additional energy needed for cell homeostasis. The protein is ATP synthase small subunit 6-A, mitochondrial of Arabidopsis thaliana (Mouse-ear cress).